Reading from the N-terminus, the 498-residue chain is Ammonium transporter 1 member 3 (498 aa).

The next 11 membrane-spanning stretches (helical) occupy residues 41-61 (LLFS…LCAG), 76-96 (VLDA…FAFG), 122-142 (FFLF…GSIA), 150-170 (YLIY…HWFW), 194-214 (FAGS…GAFI), 238-258 (LVVL…PGSF), 277-299 (AVGR…TLYG), 307-327 (WNVT…TAGC), 329-349 (VVDP…LIGC), 362-382 (LEAT…TALF), and 414-434 (IVQI…LFYV). Residues 473–498 (RAKSAAETARVEPRKSPEQAAAGQFV) are disordered.

It belongs to the ammonia transporter channel (TC 1.A.11.2) family. Expressed in roots.

Its subcellular location is the membrane. Functionally, ammonium transporter probably involved in ammonium uptake from the soil. The polypeptide is Ammonium transporter 1 member 3 (AMT1-3) (Oryza sativa subsp. japonica (Rice)).